The sequence spans 373 residues: MAGWSCLVTGGGGFLGQRIICLLVEEKDLQEIRVLDKVFRPEVREEFSKLQSKIKLTLLEGDILDEQCLKGACQGTSVVIHTASVIDVRNAVPRETIMNVNVKGTQLLLEACVQASVPVFIHTSTIEVAGPNSYREIIQDGREEEHHESAWSSPYPYSKKLAEKAVLGANGWALKNGGTLYTCALRPMYIYGEGSPFLSAYMHGALNNNGILTNHCKFSRVNPVYVGNVAWAHILALRALRDPKKVPNIQGQFYYISDDTPHQSYDDLNYTLSKEWGFCLDSRMSLPISLQYWLAFLLEIVSFLLSPIYKYNPCFNRHLVTLSNSVFTFSYKKAQRDLGYEPLYTWEEAKQKTKEWIGSLVKQHKETLKTKIH.

Tyrosine 155 acts as the Proton acceptor in catalysis. Lysine 159 provides a ligand contact to NAD(+). The chain crosses the membrane as a helical span at residues 288–308 (ISLQYWLAFLLEIVSFLLSPI).

The protein belongs to the 3-beta-HSD family.

The protein resides in the endoplasmic reticulum membrane. It localises to the mitochondrion membrane. It catalyses the reaction a 3beta-hydroxy-Delta(5)-steroid + NAD(+) = a 3-oxo-Delta(5)-steroid + NADH + H(+). It carries out the reaction a 3-oxo-Delta(5)-steroid = a 3-oxo-Delta(4)-steroid. It participates in lipid metabolism; steroid biosynthesis. Functionally, 3-beta-HSD is a bifunctional enzyme, that catalyzes the oxidative conversion of Delta(5)-ene-3-beta-hydroxy steroid, and the oxidative conversion of ketosteroids. The 3-beta-HSD enzymatic system plays a crucial role in the biosynthesis of all classes of hormonal steroids. The protein is 3 beta-hydroxysteroid dehydrogenase/Delta 5--&gt;4-isomerase (HSD3B) of Bos taurus (Bovine).